Consider the following 647-residue polypeptide: DNA ligase (647 aa).

Residues 30–34 (DEEYD), 79–80 (SM), and Glu-106 each bind NAD(+). The active-site N6-AMP-lysine intermediate is the Lys-108. 3 residues coordinate NAD(+): Arg-129, Glu-163, and Lys-301. Zn(2+)-binding residues include Cys-395, Cys-398, Cys-411, and Cys-416. Residues 569-647 (SISNALSGKT…SEYERLKLEV (79 aa)) form the BRCT domain.

This sequence belongs to the NAD-dependent DNA ligase family. LigA subfamily. Requires Mg(2+) as cofactor. It depends on Mn(2+) as a cofactor.

It catalyses the reaction NAD(+) + (deoxyribonucleotide)n-3'-hydroxyl + 5'-phospho-(deoxyribonucleotide)m = (deoxyribonucleotide)n+m + AMP + beta-nicotinamide D-nucleotide.. Its function is as follows. DNA ligase that catalyzes the formation of phosphodiester linkages between 5'-phosphoryl and 3'-hydroxyl groups in double-stranded DNA using NAD as a coenzyme and as the energy source for the reaction. It is essential for DNA replication and repair of damaged DNA. This chain is DNA ligase, found in Campylobacter concisus (strain 13826).